A 47-amino-acid polypeptide reads, in one-letter code: Photosystem II reaction center protein K (47 aa).

Positions 1–10 are excised as a propeptide; that stretch reads MAPLTLDLLA. A helical transmembrane segment spans residues 26–46; the sequence is LPLIPLLFFLLVFVWQAAVGF.

Belongs to the PsbK family. In terms of assembly, PSII is composed of 1 copy each of membrane proteins PsbA, PsbB, PsbC, PsbD, PsbE, PsbF, PsbH, PsbI, PsbJ, PsbK, PsbL, PsbM, PsbT, PsbX, PsbY, Psb30/Ycf12, peripheral proteins PsbO, CyanoQ (PsbQ), PsbU, PsbV and a large number of cofactors. It forms dimeric complexes.

The protein localises to the cellular thylakoid membrane. Functionally, one of the components of the core complex of photosystem II (PSII). PSII is a light-driven water:plastoquinone oxidoreductase that uses light energy to abstract electrons from H(2)O, generating O(2) and a proton gradient subsequently used for ATP formation. It consists of a core antenna complex that captures photons, and an electron transfer chain that converts photonic excitation into a charge separation. In Prochlorococcus marinus (strain SARG / CCMP1375 / SS120), this protein is Photosystem II reaction center protein K.